We begin with the raw amino-acid sequence, 261 residues long: Mite allergen Der p 3 (261 aa).

Residues 1–18 (MIIYNILIVLLLAINTLA) form the signal peptide. Positions 19–29 (NPILPASPNAT) are excised as a propeptide. Positions 30 to 260 (IVGGEKALAG…FIDWIESKRS (231 aa)) constitute a Peptidase S1 domain. An intrachain disulfide couples cysteine 54 to cysteine 70. Residues histidine 69 and aspartate 114 each act as charge relay system in the active site. 2 disulfide bridges follow: cysteine 181-cysteine 198 and cysteine 210-cysteine 236. The active-site Charge relay system is the serine 214.

This sequence belongs to the peptidase S1 family.

The protein localises to the secreted. The sequence is that of Mite allergen Der p 3 (DERP3) from Dermatophagoides pteronyssinus (European house dust mite).